Reading from the N-terminus, the 29-residue chain is Glucagon (29 aa).

It belongs to the glucagon family.

It localises to the secreted. Glucagon plays a key role in glucose metabolism and homeostasis. Regulates blood glucose by increasing gluconeogenesis and decreasing glycolysis. The protein is Glucagon (GCG) of Struthio camelus (Common ostrich).